Here is a 331-residue protein sequence, read N- to C-terminus: Putative mitochondrial 2-oxoglutarate/malate carrier protein (331 aa).

3 Solcar repeats span residues 39–128, 140–231, and 239–329; these read VRAA…FMSR, VGFK…AKAQ, and SSKV…LGWL. The next 6 helical transmembrane spans lie at 42–62, 103–121, 148–168, 199–219, 245–265, and 309–329; these read ALPFINGGLSGMVATTVIQPI, GLSAGLLRQAVYTTARIGC, AGLAAGGLAAMIGNPADLALI, GVAALWAGAAPTVVRAMALNF, LSASAIAGFFASFFSLPFDFV, and YVRIAPHAMVTLLVADYLGWL.

The protein belongs to the mitochondrial carrier (TC 2.A.29) family.

Its subcellular location is the mitochondrion inner membrane. Catalyzes the transport of 2-oxoglutarate across the inner mitochondrial membrane. This Neurospora crassa (strain ATCC 24698 / 74-OR23-1A / CBS 708.71 / DSM 1257 / FGSC 987) protein is Putative mitochondrial 2-oxoglutarate/malate carrier protein (mic-33).